A 164-amino-acid polypeptide reads, in one-letter code: Large ribosomal subunit protein uL15 (164 aa).

The span at 1–33 shows a compositional bias: basic residues; the sequence is MTSKKRRQRGSRTHGGGTHKNRRGAGHRGGRGR. Disordered regions lie at residues 1–59 and 137–164; these read MTSK…PGAE and AGGS…NDEN. Residues 34-43 are compositionally biased toward basic and acidic residues; sequence AGRDKHEQHN. The segment covering 153-164 has biased composition (acidic residues); that stretch reads GEDEEPNSNDEN.

Belongs to the universal ribosomal protein uL15 family. In terms of assembly, part of the 50S ribosomal subunit.

In terms of biological role, binds to the 23S rRNA. The polypeptide is Large ribosomal subunit protein uL15 (Haloquadratum walsbyi (strain DSM 16790 / HBSQ001)).